Reading from the N-terminus, the 643-residue chain is Threonine--tRNA ligase (643 aa).

The TGS domain occupies 1 to 61 (MVAISLPDGS…TTDASVSLIT (61 aa)). Residues 243 to 534 (DHRRVGQEMD…LIENCAGRFP (292 aa)) form a catalytic region. Residues Cys-334, His-385, and His-511 each contribute to the Zn(2+) site.

This sequence belongs to the class-II aminoacyl-tRNA synthetase family. In terms of assembly, homodimer. The cofactor is Zn(2+).

It is found in the cytoplasm. It carries out the reaction tRNA(Thr) + L-threonine + ATP = L-threonyl-tRNA(Thr) + AMP + diphosphate + H(+). Catalyzes the attachment of threonine to tRNA(Thr) in a two-step reaction: L-threonine is first activated by ATP to form Thr-AMP and then transferred to the acceptor end of tRNA(Thr). Also edits incorrectly charged L-seryl-tRNA(Thr). This chain is Threonine--tRNA ligase, found in Rhodospirillum rubrum (strain ATCC 11170 / ATH 1.1.1 / DSM 467 / LMG 4362 / NCIMB 8255 / S1).